We begin with the raw amino-acid sequence, 371 residues long: Anhydro-N-acetylmuramic acid kinase (371 aa).

10–17 (GTSLDGID) is an ATP binding site.

It belongs to the anhydro-N-acetylmuramic acid kinase family.

It catalyses the reaction 1,6-anhydro-N-acetyl-beta-muramate + ATP + H2O = N-acetyl-D-muramate 6-phosphate + ADP + H(+). The protein operates within amino-sugar metabolism; 1,6-anhydro-N-acetylmuramate degradation. Its pathway is cell wall biogenesis; peptidoglycan recycling. Functionally, catalyzes the specific phosphorylation of 1,6-anhydro-N-acetylmuramic acid (anhMurNAc) with the simultaneous cleavage of the 1,6-anhydro ring, generating MurNAc-6-P. Is required for the utilization of anhMurNAc either imported from the medium or derived from its own cell wall murein, and thus plays a role in cell wall recycling. The sequence is that of Anhydro-N-acetylmuramic acid kinase from Chromohalobacter salexigens (strain ATCC BAA-138 / DSM 3043 / CIP 106854 / NCIMB 13768 / 1H11).